The primary structure comprises 494 residues: Neuronal pentraxin receptor (494 aa).

Over 1–2 (MK) the chain is Cytoplasmic. The helical; Signal-anchor for type II membrane protein transmembrane segment at 3–23 (FLAVLLAAGMLAFLGAVICII) threads the bilayer. At 24 to 494 (ASVPLAASPA…FDVCKRRAKA (471 aa)) the chain is on the extracellular side. A disordered region spans residues 37-80 (PGGTDNASAASAAGAPGPQRSLSALQGAGGSAGPSVLPGEPAAS). N-linked (GlcNAc...) asparagine glycosylation occurs at N42. Low complexity-rich tracts occupy residues 43 to 62 (ASAA…SALQ) and 69 to 80 (GPSVLPGEPAAS). N211 carries N-linked (GlcNAc...) asparagine glycosylation. One can recognise a Pentraxin (PTX) domain in the interval 286 to 488 (DAFKVSIPIR…GAKKAAFDVC (203 aa)). Residues C316 and C377 are joined by a disulfide bond. The Ca(2+) site is built by N341, E419, Q420, D421, and Q431. The N-linked (GlcNAc...) asparagine glycan is linked to N457.

In terms of assembly, interacts with KLHL2. Heteropentamer with NPTX1 and/or NPTX2. Also binds taipoxin-associated calcium-binding protein 49 (TCBP49/RCN2). Ca(2+) is required as a cofactor. In terms of processing, N-glycosylated. Ubiquitinated by a cullin-RING-based BCR (BTB-CUL3-RBX1) E3 ubiquitin-protein ligase complex containing KLHL2. In terms of tissue distribution, brain specific.

It localises to the membrane. Its function is as follows. May be involved in mediating uptake of synaptic material during synapse remodeling or in mediating the synaptic clustering of AMPA glutamate receptors at a subset of excitatory synapses. The protein is Neuronal pentraxin receptor (Nptxr) of Rattus norvegicus (Rat).